Here is a 597-residue protein sequence, read N- to C-terminus: Elongation factor 4 (597 aa).

A tr-type G domain is found at lysine 2–glutamate 184. GTP is bound by residues aspartate 14–threonine 19 and asparagine 131–aspartate 134.

The protein belongs to the TRAFAC class translation factor GTPase superfamily. Classic translation factor GTPase family. LepA subfamily.

The protein resides in the cell inner membrane. It catalyses the reaction GTP + H2O = GDP + phosphate + H(+). In terms of biological role, required for accurate and efficient protein synthesis under certain stress conditions. May act as a fidelity factor of the translation reaction, by catalyzing a one-codon backward translocation of tRNAs on improperly translocated ribosomes. Back-translocation proceeds from a post-translocation (POST) complex to a pre-translocation (PRE) complex, thus giving elongation factor G a second chance to translocate the tRNAs correctly. Binds to ribosomes in a GTP-dependent manner. The chain is Elongation factor 4 from Edwardsiella ictaluri (strain 93-146).